The sequence spans 505 residues: tRNA-2-methylthio-N(6)-dimethylallyladenosine synthase (505 aa).

The region spanning 14-132 (RTYEVRTYGC…LPVLLERARV (119 aa)) is the MTTase N-terminal domain. Cys23, Cys61, Cys95, Cys169, Cys173, and Cys176 together coordinate [4Fe-4S] cluster. The region spanning 155–386 (RESAYAAWVS…ALQEEISWEE (232 aa)) is the Radical SAM core domain. Residues 388 to 456 (KKQVGRTLEL…PHHLLAEGPV (69 aa)) enclose the TRAM domain.

The protein belongs to the methylthiotransferase family. MiaB subfamily. As to quaternary structure, monomer. It depends on [4Fe-4S] cluster as a cofactor.

The protein resides in the cytoplasm. It catalyses the reaction N(6)-dimethylallyladenosine(37) in tRNA + (sulfur carrier)-SH + AH2 + 2 S-adenosyl-L-methionine = 2-methylsulfanyl-N(6)-dimethylallyladenosine(37) in tRNA + (sulfur carrier)-H + 5'-deoxyadenosine + L-methionine + A + S-adenosyl-L-homocysteine + 2 H(+). Functionally, catalyzes the methylthiolation of N6-(dimethylallyl)adenosine (i(6)A), leading to the formation of 2-methylthio-N6-(dimethylallyl)adenosine (ms(2)i(6)A) at position 37 in tRNAs that read codons beginning with uridine. The protein is tRNA-2-methylthio-N(6)-dimethylallyladenosine synthase of Streptomyces viridosporus (strain ATCC 14672 / DSM 40746 / JCM 4963 / KCTC 9882 / NRRL B-12104 / FH 1290) (Streptomyces ghanaensis).